The sequence spans 181 residues: Der GTPase-activating protein YihI (181 aa).

2 disordered regions span residues 1–75 and 145–181; these read MSRK…KKIP and EPEA…DYKG. Residues 32 to 43 show a composition bias toward basic residues; sequence RLRKKDKKRKGL. Acidic residues predominate over residues 146 to 155; sequence PEAEEEFEEE. The segment covering 156-165 has biased composition (basic and acidic residues); the sequence is APVRKSRSDD. The span at 166–181 shows a compositional bias: acidic residues; that stretch reads DLLADFEDFDMDDYKG.

This sequence belongs to the YihI family. In terms of assembly, interacts with Der.

Its function is as follows. A GTPase-activating protein (GAP) that modifies Der/EngA GTPase function. May play a role in ribosome biogenesis. This chain is Der GTPase-activating protein YihI, found in Vibrio vulnificus (strain CMCP6).